Reading from the N-terminus, the 909-residue chain is Ribosome-releasing factor 2, mitochondrial (909 aa).

A mitochondrion-targeting transit peptide spans 1–15 (MVAAPLLRAHQAARL). The tr-type G domain maps to 57–367 (DRTRNIGIIA…AVTNLLPSPP (311 aa)). 66-73 (AHIDAGKT) provides a ligand contact to GTP. The interval 121 to 148 (WPPQTAGDGNTTPQEPQTPRSASSHTVN) is disordered. Residues 127–148 (GDGNTTPQEPQTPRSASSHTVN) are compositionally biased toward polar residues. Residues 151–155 (DTPGH) and 205–208 (NKLD) contribute to the GTP site.

This sequence belongs to the TRAFAC class translation factor GTPase superfamily. Classic translation factor GTPase family. EF-G/EF-2 subfamily.

It is found in the mitochondrion. In terms of biological role, mitochondrial GTPase that mediates the disassembly of ribosomes from messenger RNA at the termination of mitochondrial protein biosynthesis. Not involved in the GTP-dependent ribosomal translocation step during translation elongation. The sequence is that of Ribosome-releasing factor 2, mitochondrial (mef2) from Aspergillus flavus (strain ATCC 200026 / FGSC A1120 / IAM 13836 / NRRL 3357 / JCM 12722 / SRRC 167).